Consider the following 230-residue polypeptide: uncharacterized protein (230 aa).

Helical transmembrane passes span 34 to 54 (FFAG…MNFQ), 56 to 76 (VVQY…GLMF), 87 to 107 (MLFA…GMVI), 111 to 131 (GLGA…LMSV), 146 to 166 (MLFI…FLGS), 167 to 187 (PMFQ…YIAY), and 205 to 225 (VSLY…IGIF).

The protein belongs to the BI1 family.

The protein resides in the cell membrane. This is an uncharacterized protein from Helicobacter pylori (strain J99 / ATCC 700824) (Campylobacter pylori J99).